Consider the following 412-residue polypeptide: Serine hydroxymethyltransferase (412 aa).

Residues Leu117 and 121–123 (GHL) each bind (6S)-5,6,7,8-tetrahydrofolate. At Lys226 the chain carries N6-(pyridoxal phosphate)lysine.

The protein belongs to the SHMT family. In terms of assembly, homodimer. Requires pyridoxal 5'-phosphate as cofactor.

The protein localises to the cytoplasm. It catalyses the reaction (6R)-5,10-methylene-5,6,7,8-tetrahydrofolate + glycine + H2O = (6S)-5,6,7,8-tetrahydrofolate + L-serine. Its pathway is one-carbon metabolism; tetrahydrofolate interconversion. The protein operates within amino-acid biosynthesis; glycine biosynthesis; glycine from L-serine: step 1/1. In terms of biological role, catalyzes the reversible interconversion of serine and glycine with tetrahydrofolate (THF) serving as the one-carbon carrier. This reaction serves as the major source of one-carbon groups required for the biosynthesis of purines, thymidylate, methionine, and other important biomolecules. Also exhibits THF-independent aldolase activity toward beta-hydroxyamino acids, producing glycine and aldehydes, via a retro-aldol mechanism. The sequence is that of Serine hydroxymethyltransferase from Natranaerobius thermophilus (strain ATCC BAA-1301 / DSM 18059 / JW/NM-WN-LF).